A 1174-amino-acid chain; its full sequence is Pesticidal crystal protein Cry1Fa (1174 aa).

Belongs to the delta endotoxin family.

Functionally, promotes colloidosmotic lysis by binding to the midgut epithelial cells of many lepidopteran larvae. The protein is Pesticidal crystal protein Cry1Fa (cry1Fa) of Bacillus thuringiensis subsp. aizawai.